A 25-amino-acid chain; its full sequence is Snake venom metalloproteinase catroxase (25 aa).

Position 9 (glutamate 9) interacts with Ca(2+).

The protein belongs to the venom metalloproteinase (M12B) family. As to quaternary structure, monomer. Zn(2+) is required as a cofactor. In terms of tissue distribution, expressed by the venom gland.

Its subcellular location is the secreted. Inhibited by EDTA, beta-mercaptoethanol, but not by PMSF, p-tosyl-L-phenylalanine chloromethyl ketone, p-tosyl-L-lysine chloromethyl ketone, soybean trypsin inhibitor and aprotinin. In terms of biological role, metalloprotease that is highly active against alpha-(FGA) and beta-chains (FGB) of fibrinogen molecules. This Crotalus atrox (Western diamondback rattlesnake) protein is Snake venom metalloproteinase catroxase.